Here is a 141-residue protein sequence, read N- to C-terminus: Hemoglobin subunit alpha (141 aa).

The 141-residue stretch at 1–141 folds into the Globin domain; the sequence is VLSSDDKCNV…VSSVLTSKYR (141 aa). His58 provides a ligand contact to O2. Position 87 (His87) interacts with heme b.

It belongs to the globin family. Heterotetramer of two alpha chains and two beta chains. As to expression, red blood cells.

In terms of biological role, involved in oxygen transport from the lung to the various peripheral tissues. In Crocodylus niloticus (Nile crocodile), this protein is Hemoglobin subunit alpha (HBA).